Here is a 412-residue protein sequence, read N- to C-terminus: Pentatricopeptide repeat-containing protein At3g60980, mitochondrial (412 aa).

The N-terminal 18 residues, 1 to 18 (MSLIGRLNLGRRFCTAVP), are a transit peptide targeting the mitochondrion. 9 PPR repeats span residues 69-104 (TTTI…NLRP), 105-139 (NSHC…GQVH), 143-178 (SDDS…TTYP), 179-213 (DHVA…FLIA), 230-264 (VAFL…NRLL), 266-296 (CAET…LLDK), 305-339 (DSDT…NDYL), 344-371 (IITR…DFGY), and 373-407 (DVNT…TLKE).

The protein belongs to the PPR family. P subfamily.

It localises to the mitochondrion. In Arabidopsis thaliana (Mouse-ear cress), this protein is Pentatricopeptide repeat-containing protein At3g60980, mitochondrial.